The primary structure comprises 319 residues: Coproporphyrin III ferrochelatase 2 (319 aa).

Fe-coproporphyrin III-binding positions include tyrosine 13, arginine 30, arginine 46–tyrosine 47, serine 54, and tyrosine 125. Fe(2+) is bound by residues histidine 181 and glutamate 262.

This sequence belongs to the ferrochelatase family.

It is found in the cytoplasm. It catalyses the reaction Fe-coproporphyrin III + 2 H(+) = coproporphyrin III + Fe(2+). It participates in porphyrin-containing compound metabolism; protoheme biosynthesis. Functionally, involved in coproporphyrin-dependent heme b biosynthesis. Catalyzes the insertion of ferrous iron into coproporphyrin III to form Fe-coproporphyrin III. This Bacillus anthracis protein is Coproporphyrin III ferrochelatase 2.